A 97-amino-acid polypeptide reads, in one-letter code: Sm-like protein LSM3A (97 aa).

Serine 2 bears the N-acetylserine mark. The Sm domain occupies 11–96 (EPLDLIRLSI…VILVSPPLRT (86 aa)).

Belongs to the snRNP Sm proteins family. As to quaternary structure, component of the heptameric LSM1-LSM7 complex that forms a seven-membered ring structure with a donut shape. The LSM subunits are arranged in the order LSM1, LSM2, LSM3, LSM6, LSM5, LSM7 and LSM4. Component of the heptameric LSM2-LSM8 complex that forms a seven-membered ring structure with a donut shape. The LSM subunits are arranged in the order LSM8, LSM2, LSM3, LSM6, LSM5, LSM7 and LSM4. LSM3A subunit interacts only with its two neighboring subunits, LSM2 and LSM6A or LSM6B. As to expression, expressed in roots, leaves, stems, flowers and siliques.

The protein localises to the cytoplasm. Its subcellular location is the nucleus. Component of LSM protein complexes, which are involved in RNA processing. Component of the cytoplasmic LSM1-LSM7 complex which is involved in mRNA degradation by promoting decapping and leading to accurate 5'-3' mRNA decay. The cytoplasmic LSM1-LSM7 complex regulates developmental gene expression by the decapping of specific development-related transcripts. Component of the nuclear LSM2-LSM8 complex which is involved splicing nuclear mRNAs. LSM2-LSM8 binds directly to the U6 small nuclear RNAs (snRNAs) and is essential for accurate splicing of selected development-related mRNAs through the stabilization of the spliceosomal U6 snRNA. Plays a critical role in the regulation of development-related gene expression. In Arabidopsis thaliana (Mouse-ear cress), this protein is Sm-like protein LSM3A.